The primary structure comprises 726 residues: WD repeat and coiled-coil-containing protein (726 aa).

WD repeat units follow at residues glycine 55 to asparagine 98 and lysine 154 to cysteine 194. A disordered region spans residues serine 503–glycine 571. Residues glycine 506 to asparagine 515 show a composition bias toward polar residues. Over residues phenylalanine 517–asparagine 535 the composition is skewed to basic and acidic residues. Residues serine 550 to proline 565 are compositionally biased toward polar residues. Residues serine 581–asparagine 609 are a coiled coil.

The sequence is that of WD repeat and coiled-coil-containing protein (wdcp) from Xenopus tropicalis (Western clawed frog).